We begin with the raw amino-acid sequence, 359 residues long: Phosphoserine aminotransferase (359 aa).

An L-glutamate-binding site is contributed by R41. Residues 75–76 (AS), W101, T152, D171, and Q194 contribute to the pyridoxal 5'-phosphate site. K195 is modified (N6-(pyridoxal phosphate)lysine). 236-237 (NT) contributes to the pyridoxal 5'-phosphate binding site.

It belongs to the class-V pyridoxal-phosphate-dependent aminotransferase family. SerC subfamily. Homodimer. The cofactor is pyridoxal 5'-phosphate.

The protein localises to the cytoplasm. The catalysed reaction is O-phospho-L-serine + 2-oxoglutarate = 3-phosphooxypyruvate + L-glutamate. The enzyme catalyses 4-(phosphooxy)-L-threonine + 2-oxoglutarate = (R)-3-hydroxy-2-oxo-4-phosphooxybutanoate + L-glutamate. It functions in the pathway amino-acid biosynthesis; L-serine biosynthesis; L-serine from 3-phospho-D-glycerate: step 2/3. Its pathway is cofactor biosynthesis; pyridoxine 5'-phosphate biosynthesis; pyridoxine 5'-phosphate from D-erythrose 4-phosphate: step 3/5. Functionally, catalyzes the reversible conversion of 3-phosphohydroxypyruvate to phosphoserine and of 3-hydroxy-2-oxo-4-phosphonooxybutanoate to phosphohydroxythreonine. The polypeptide is Phosphoserine aminotransferase (Acinetobacter baylyi (strain ATCC 33305 / BD413 / ADP1)).